The chain runs to 179 residues: Large ribosomal subunit protein uL5 (179 aa).

Belongs to the universal ribosomal protein uL5 family. As to quaternary structure, part of the 50S ribosomal subunit; part of the 5S rRNA/L5/L18/L25 subcomplex. Contacts the 5S rRNA and the P site tRNA. Forms a bridge to the 30S subunit in the 70S ribosome.

Functionally, this is one of the proteins that bind and probably mediate the attachment of the 5S RNA into the large ribosomal subunit, where it forms part of the central protuberance. In the 70S ribosome it contacts protein S13 of the 30S subunit (bridge B1b), connecting the 2 subunits; this bridge is implicated in subunit movement. Contacts the P site tRNA; the 5S rRNA and some of its associated proteins might help stabilize positioning of ribosome-bound tRNAs. This Neisseria meningitidis serogroup A / serotype 4A (strain DSM 15465 / Z2491) protein is Large ribosomal subunit protein uL5.